A 1116-amino-acid chain; its full sequence is Error-prone DNA polymerase (1116 aa).

This sequence belongs to the DNA polymerase type-C family. DnaE2 subfamily.

Its subcellular location is the cytoplasm. It carries out the reaction DNA(n) + a 2'-deoxyribonucleoside 5'-triphosphate = DNA(n+1) + diphosphate. In terms of biological role, DNA polymerase involved in damage-induced mutagenesis and translesion synthesis (TLS). It is not the major replicative DNA polymerase. This Sinorhizobium medicae (strain WSM419) (Ensifer medicae) protein is Error-prone DNA polymerase.